A 455-amino-acid polypeptide reads, in one-letter code: Bifunctional protein GlmU (455 aa).

Positions 1–227 (MDSLSIVILA…SWEAAGVNNK (227 aa)) are pyrophosphorylase. Residues 9–12 (LAAG), K23, Q74, 79–80 (GT), 101–103 (YGD), G137, E152, N167, and N225 each bind UDP-N-acetyl-alpha-D-glucosamine. Mg(2+) is bound at residue D103. Residue N225 participates in Mg(2+) binding. The tract at residues 228–248 (VQLAELERILQANQARALLEA) is linker. The interval 249–455 (GVTLADPARI…GWKRPQKKSG (207 aa)) is N-acetyltransferase. UDP-N-acetyl-alpha-D-glucosamine contacts are provided by R331 and K349. H361 functions as the Proton acceptor in the catalytic mechanism. Residues Y364 and N375 each contribute to the UDP-N-acetyl-alpha-D-glucosamine site. Acetyl-CoA-binding positions include A378, 384 to 385 (NY), S403, A421, and R438.

It in the N-terminal section; belongs to the N-acetylglucosamine-1-phosphate uridyltransferase family. In the C-terminal section; belongs to the transferase hexapeptide repeat family. As to quaternary structure, homotrimer. Mg(2+) serves as cofactor.

Its subcellular location is the cytoplasm. The enzyme catalyses alpha-D-glucosamine 1-phosphate + acetyl-CoA = N-acetyl-alpha-D-glucosamine 1-phosphate + CoA + H(+). The catalysed reaction is N-acetyl-alpha-D-glucosamine 1-phosphate + UTP + H(+) = UDP-N-acetyl-alpha-D-glucosamine + diphosphate. Its pathway is nucleotide-sugar biosynthesis; UDP-N-acetyl-alpha-D-glucosamine biosynthesis; N-acetyl-alpha-D-glucosamine 1-phosphate from alpha-D-glucosamine 6-phosphate (route II): step 2/2. It functions in the pathway nucleotide-sugar biosynthesis; UDP-N-acetyl-alpha-D-glucosamine biosynthesis; UDP-N-acetyl-alpha-D-glucosamine from N-acetyl-alpha-D-glucosamine 1-phosphate: step 1/1. It participates in bacterial outer membrane biogenesis; LPS lipid A biosynthesis. Its function is as follows. Catalyzes the last two sequential reactions in the de novo biosynthetic pathway for UDP-N-acetylglucosamine (UDP-GlcNAc). The C-terminal domain catalyzes the transfer of acetyl group from acetyl coenzyme A to glucosamine-1-phosphate (GlcN-1-P) to produce N-acetylglucosamine-1-phosphate (GlcNAc-1-P), which is converted into UDP-GlcNAc by the transfer of uridine 5-monophosphate (from uridine 5-triphosphate), a reaction catalyzed by the N-terminal domain. In Chromobacterium violaceum (strain ATCC 12472 / DSM 30191 / JCM 1249 / CCUG 213 / NBRC 12614 / NCIMB 9131 / NCTC 9757 / MK), this protein is Bifunctional protein GlmU.